Here is a 256-residue protein sequence, read N- to C-terminus: Ribosomal RNA small subunit methyltransferase J (256 aa).

S-adenosyl-L-methionine contacts are provided by residues 101-102 (RD), 117-118 (ER), and D174.

Belongs to the methyltransferase superfamily. RsmJ family.

The protein localises to the cytoplasm. The enzyme catalyses guanosine(1516) in 16S rRNA + S-adenosyl-L-methionine = N(2)-methylguanosine(1516) in 16S rRNA + S-adenosyl-L-homocysteine + H(+). Its function is as follows. Specifically methylates the guanosine in position 1516 of 16S rRNA. This chain is Ribosomal RNA small subunit methyltransferase J, found in Chromohalobacter salexigens (strain ATCC BAA-138 / DSM 3043 / CIP 106854 / NCIMB 13768 / 1H11).